The chain runs to 272 residues: MTDDSLFLIDVDKILRTKAPKQYKYIPKFVVSYLKKIVHQDEINVFLNESKDKLGVDFLEACMEFLDAKVEVKGIENLPKEGLYTFVSNHPLGGQDGVALGYVLGRHYDGKVKYLVNDLLMNLRGLAPLCVPINKTGKQAKDFPKMVEAGFQSDDQMIMFPAGLCSRRQNGVIRDLEWKKTFIIKSIQAKRDVVPVHFGGRNSDFFYNLANVCKALGIKFNIAMLYLADEMFKNRHKTFTVTFGKPIPWQTFDKSKTPAQWAEYVKDIVYKL.

The protein belongs to the O-acyltransferase GlsA family.

It catalyses the reaction a lyso-glycine lipid + a fatty acyl-[ACP] = a glycine lipid + holo-[ACP]. The catalysed reaction is N-[(3R)-3-hydroxyhexadecanoyl]-glycine + hexadecanoyl-[ACP] = N-[(3R)-3-(hexadecanoyloxy)hexadecanoyl]-glycine + holo-[ACP]. Its pathway is lipid metabolism. Is involved in the production of glycine lipids (GL), which are phosphorus-free membrane lipids important for fitness during growth of the human gut bacterium B.thetaiotaomicron in vivo and in vitro. Catalyzes the second step of GL biosynthesis, i.e. the O-acylation of the hydroxyl group of lyso-glycine lipids, resulting in the production of the mature diacylated glycine lipids. This is Lyso-glycine lipid O-acyltransferase from Bacteroides thetaiotaomicron (strain ATCC 29148 / DSM 2079 / JCM 5827 / CCUG 10774 / NCTC 10582 / VPI-5482 / E50).